We begin with the raw amino-acid sequence, 181 residues long: Putative adenylate kinase (181 aa).

The ATP site is built by Gly-10, Gly-12, Lys-13, Ser-14, and Thr-15. The segment at 35 to 58 (NITEVVSKNGLYLEKDIEMDSYVV) is NMP. The tract at residues 106 to 116 (SRNYSSEKVKE) is LID. 2 residues coordinate ATP: Arg-107 and Lys-147.

Belongs to the adenylate kinase family. AK6 subfamily. In terms of assembly, interacts with uS11. Not a structural component of 40S pre-ribosomes, but transiently interacts with them by binding to uS11.

The enzyme catalyses AMP + ATP = 2 ADP. The catalysed reaction is ATP + H2O = ADP + phosphate + H(+). Its function is as follows. Broad-specificity nucleoside monophosphate (NMP) kinase that catalyzes the reversible transfer of the terminal phosphate group between nucleoside triphosphates and monophosphates. Also has ATPase activity. Involved in the late maturation steps of the 30S ribosomal particles, specifically 16S rRNA maturation. While NMP activity is not required for ribosome maturation, ATPase activity is. Associates transiently with small ribosomal subunit protein uS11. ATP hydrolysis breaks the interaction with uS11. May temporarily remove uS11 from the ribosome to enable a conformational change of the ribosomal RNA that is needed for the final maturation step of the small ribosomal subunit. The polypeptide is Putative adenylate kinase (Methanococcus maripaludis (strain C7 / ATCC BAA-1331)).